We begin with the raw amino-acid sequence, 352 residues long: Outer membrane protein assembly factor BamC (352 aa).

The N-terminal stretch at 1–24 (MAISLQKSTVVKVVGVSLVMLLAA) is a signal peptide. Cys-25 is lipidated: N-palmitoyl cysteine. Cys-25 carries S-diacylglycerol cysteine lipidation.

This sequence belongs to the BamC family. In terms of assembly, part of the Bam complex, which is composed of the outer membrane protein BamA, and four lipoproteins BamB, BamC, BamD and BamE.

It localises to the cell outer membrane. In terms of biological role, part of the outer membrane protein assembly complex, which is involved in assembly and insertion of beta-barrel proteins into the outer membrane. This chain is Outer membrane protein assembly factor BamC, found in Yersinia pestis.